A 906-amino-acid chain; its full sequence is MIANILKKVFGSRNDRLLKQYRAVVNRINALESGLQTLDDAALAGKTAEFRARVEKGERLDSLLPEAFAVCREASRRVMGMRHFDVQLIGGMVLHDGKIAEMRTGEGKTLVATLPAYLNALAGKGVHVVTVNDYLASRDAGIMAPLYNFLGLSVGVNLSQMPHDAKQDAYAADITYGTNNEFGFDYLRDNMVYSPAERVQKPLSFAIVDEVDSILIDEARTPLIISGPADDNVDMYRRMNAIPALLVRQQAEDGEGDYWVDEKAHTVMLSEAGFEHAEAALVAADLLKEGESLYSAANITLMHHLMAALRAHALFHRDQHYVVQDGEIVIVDEFTGRLMAGRRWSEGLHQAVEAKEGVNINRENQTLASITFQNYFRLYKKLAGMTGTADTEAYEFQQIYGLETVVIPTNRPMVRKDSLDLVYRTGQEKYNAILADITDCHQRGQPVLVGTTSIENSELLAGLLKQAGLPHNVLNAKEHAREADIIVQAGRPGVVTVATNMAGRGTDIVLGGNIAPEIKAIESDESLTADDRAQRIAALKAEWQARHDAVLAAGGLHIIGTERHESRRIDNQLRGRSGRQGDPGSSRFYLSLEDPLLRIFASERVSAIMQRLNMPEGEAIEHSWVTRAIENAQRKVEGRNFDIRKQLLEYDDVANDQRRVIYQQRNEILESEEVSDMIAAMRDDVLSQLFDTWMPPQSIEEQWDAAGLMRVLEADYQISVPLADWIKAEPNAELDTFKIRILEQARALYDEKVAAVGAASMQQFERAVLLQHFDGAWREHLAALDHLRQGIHLRGYAQKNPKQEYKREAFELFSLMLDRIKREVTQIVATVQIRSPEEAAAAEAFEHEERPMTYRHDEFTVEGDEAGEGNPFTAEKLAAAGVRVGRNDPCPCGSGKRYKQCHGRLA.

ATP-binding positions include glutamine 87, 105-109 (GEGKT), and aspartate 507. Residues cysteine 890, cysteine 892, cysteine 901, and histidine 902 each contribute to the Zn(2+) site.

The protein belongs to the SecA family. As to quaternary structure, monomer and homodimer. Part of the essential Sec protein translocation apparatus which comprises SecA, SecYEG and auxiliary proteins SecDF-YajC and YidC. Requires Zn(2+) as cofactor.

It is found in the cell inner membrane. It localises to the cytoplasm. It carries out the reaction ATP + H2O + cellular proteinSide 1 = ADP + phosphate + cellular proteinSide 2.. Functionally, part of the Sec protein translocase complex. Interacts with the SecYEG preprotein conducting channel. Has a central role in coupling the hydrolysis of ATP to the transfer of proteins into and across the cell membrane, serving both as a receptor for the preprotein-SecB complex and as an ATP-driven molecular motor driving the stepwise translocation of polypeptide chains across the membrane. This is Protein translocase subunit SecA from Laribacter hongkongensis (strain HLHK9).